Reading from the N-terminus, the 419-residue chain is UDP-N-acetylglucosamine 1-carboxyvinyltransferase (419 aa).

Residue 23-24 (KN) participates in phosphoenolpyruvate binding. Arg-92 contributes to the UDP-N-acetyl-alpha-D-glucosamine binding site. Cys-116 serves as the catalytic Proton donor. Cys-116 is modified (2-(S-cysteinyl)pyruvic acid O-phosphothioketal). Residues 121–125 (RPVDL), 161–164 (KVSV), Asp-306, and Ile-328 contribute to the UDP-N-acetyl-alpha-D-glucosamine site.

Belongs to the EPSP synthase family. MurA subfamily.

The protein localises to the cytoplasm. The catalysed reaction is phosphoenolpyruvate + UDP-N-acetyl-alpha-D-glucosamine = UDP-N-acetyl-3-O-(1-carboxyvinyl)-alpha-D-glucosamine + phosphate. It functions in the pathway cell wall biogenesis; peptidoglycan biosynthesis. Functionally, cell wall formation. Adds enolpyruvyl to UDP-N-acetylglucosamine. The sequence is that of UDP-N-acetylglucosamine 1-carboxyvinyltransferase from Vibrio cholerae serotype O1 (strain ATCC 39541 / Classical Ogawa 395 / O395).